We begin with the raw amino-acid sequence, 149 residues long: Transcriptional repressor NrdR (149 aa).

The segment at 3-34 (CPFCSAVDTKVIDSRLVGDGSQVRRRRQCLVC) is a zinc-finger region. One can recognise an ATP-cone domain in the interval 49 to 139 (PRVVKSNGVR…VYRSFEDVRE (91 aa)).

The protein belongs to the NrdR family. It depends on Zn(2+) as a cofactor.

Its function is as follows. Negatively regulates transcription of bacterial ribonucleotide reductase nrd genes and operons by binding to NrdR-boxes. This Edwardsiella ictaluri (strain 93-146) protein is Transcriptional repressor NrdR.